Consider the following 97-residue polypeptide: Co-chaperonin GroES (97 aa).

Belongs to the GroES chaperonin family. As to quaternary structure, heptamer of 7 subunits arranged in a ring. Interacts with the chaperonin GroEL.

It localises to the cytoplasm. Together with the chaperonin GroEL, plays an essential role in assisting protein folding. The GroEL-GroES system forms a nano-cage that allows encapsulation of the non-native substrate proteins and provides a physical environment optimized to promote and accelerate protein folding. GroES binds to the apical surface of the GroEL ring, thereby capping the opening of the GroEL channel. This Serratia proteamaculans (strain 568) protein is Co-chaperonin GroES.